The chain runs to 438 residues: Transposon Ty2-LR2 Gag polyprotein (438 aa).

Composition is skewed to polar residues over residues 1–11 (MESQQLHQNPH), 19–39 (ASVT…SASN), and 49–60 (KVNSQEETTPGT). Disordered stretches follow at residues 1–88 (MESQ…YQQH), 364–397 (KNVS…AKAH), and 418–438 (VSSQ…TERI). An RNA-binding region spans residues 295 to 397 (ENNINVSDRL…SSKPRAAKAH (103 aa)). A compositionally biased stretch (low complexity) spans 369 to 381 (TSPNTTNTKVTTR).

Homotrimer.

The protein resides in the cytoplasm. Capsid protein (CA) is the structural component of the virus-like particle (VLP), forming the shell that encapsulates the retrotransposons dimeric RNA genome. The particles are assembled from trimer-clustered units and there are holes in the capsid shells that allow for the diffusion of macromolecules. CA also has nucleocapsid-like chaperone activity, promoting primer tRNA(i)-Met annealing to the multipartite primer-binding site (PBS), dimerization of Ty2 RNA and initiation of reverse transcription. This chain is Transposon Ty2-LR2 Gag polyprotein (TY2A-LR2), found in Saccharomyces cerevisiae (strain ATCC 204508 / S288c) (Baker's yeast).